The primary structure comprises 91 residues: Small ribosomal subunit protein uS17 (91 aa).

The protein belongs to the universal ribosomal protein uS17 family. In terms of assembly, part of the 30S ribosomal subunit.

Its function is as follows. One of the primary rRNA binding proteins, it binds specifically to the 5'-end of 16S ribosomal RNA. In Saccharopolyspora erythraea (strain ATCC 11635 / DSM 40517 / JCM 4748 / NBRC 13426 / NCIMB 8594 / NRRL 2338), this protein is Small ribosomal subunit protein uS17.